The following is a 119-amino-acid chain: MTNTRAIYAVIAILAIVISAVESTGDFGDSLDFVRAGSSSLFSGCTGSIAECIAEEEEMEFDSDISRRILAQKKYISYGAMRRNSVPCSRRGASYYNCQRGAQANPYSRGCSTITRCRR.

The signal sequence occupies residues 1–23 (MTNTRAIYAVIAILAIVISAVES). The propeptide at 24-70 (TGDFGDSLDFVRAGSSSLFSGCTGSIAECIAEEEEMEFDSDISRRIL) is removed in mature form. Intrachain disulfides connect Cys-88/Cys-98 and Cys-111/Cys-117.

This sequence belongs to the plant rapid alkalinization factor (RALF) family. In terms of processing, proteolytically cleaved, probably by S1P, a subtilisin-like serine protease (subtilase).

It localises to the secreted. Its function is as follows. Cell signaling peptide that may regulate plant stress, growth, and development. Mediates a rapid alkalinization of extracellular space by mediating a transient increase in the cytoplasmic Ca(2+) concentration leading to a calcium-dependent signaling events through a cell surface receptor and a concomitant activation of some intracellular mitogen-activated protein kinases. The polypeptide is Protein RALF-like 22 (RALFL22) (Arabidopsis thaliana (Mouse-ear cress)).